The chain runs to 501 residues: CUGBP Elav-like family member 1 (501 aa).

The segment at asparagine 2–arginine 196 is binds strongly to URE. 2 consecutive RRM domains span residues isoleucine 16–serine 99 and arginine 108–threonine 188. Low complexity-rich tracts occupy residues proline 274–glycine 298 and serine 312–asparagine 323. Residues proline 274 to asparagine 323 are disordered. The binds strongly to URE stretch occupies residues leucine 397 to tyrosine 501. Positions alanine 416 to serine 494 constitute an RRM 3 domain.

This sequence belongs to the CELF/BRUNOL family.

It is found in the nucleus. The protein resides in the cytoplasm. RNA-binding protein implicated in the regulation of several post-transcriptional events. May be involved in mRNA translation activation and stability. Involved in the regulation of muscle-specific splicing of alpha actinin pre-mRNAs via the binding to the UR-repeat element (URE) at the branch point of the non-muscle (NM) exon. The polypeptide is CUGBP Elav-like family member 1 (celf1) (Danio rerio (Zebrafish)).